The sequence spans 374 residues: Homoserine O-succinyltransferase (374 aa).

In terms of domain architecture, AB hydrolase-1 spans 47–357 (NAILVCHALS…NFGHDSFLME (311 aa)). The active-site Nucleophile is S153. R223 is a binding site for substrate. Residues D318 and H351 contribute to the active site. D352 is a substrate binding site.

The protein belongs to the AB hydrolase superfamily. MetX family. In terms of assembly, homodimer.

The protein resides in the cytoplasm. It catalyses the reaction L-homoserine + succinyl-CoA = O-succinyl-L-homoserine + CoA. Its pathway is amino-acid biosynthesis; L-methionine biosynthesis via de novo pathway; O-succinyl-L-homoserine from L-homoserine: step 1/1. Its function is as follows. Transfers a succinyl group from succinyl-CoA to L-homoserine, forming succinyl-L-homoserine. This Dechloromonas aromatica (strain RCB) protein is Homoserine O-succinyltransferase.